Consider the following 208-residue polypeptide: uncharacterized protein (208 aa).

2 disordered regions span residues 1–78 and 154–208; these read MDLF…SPTE and RRRS…PRNY. The segment covering 40-51 has biased composition (basic residues); that stretch reads KNHKKAQPRRTT. A compositionally biased stretch (polar residues) spans 179–197; that stretch reads ANSSSPNPTATGSETSYGS.

This is an uncharacterized protein from Caenorhabditis elegans.